Here is a 312-residue protein sequence, read N- to C-terminus: uncharacterized protein (312 aa).

The next 8 helical transmembrane spans lie at 4–24 (IFLAGLAAGFQTTWTLGKVIF), 45–65 (LITPVMGLFGLSGEAAIPLVL), 75–95 (IAGILTLDLSVKEVFILAVML), 117–137 (VILAVRIGLAAVSAIVINLIW), 171–191 (GLGVLQLAAIVIPLMIIIQFL), 217–237 (TSMTMVTGLTIGLAYGAGVMI), 253–275 (AFIFLVACHAVVEDTLVFIPLGI), and 280–299 (LLLIRVTTAVLLTMAIAHTW).

It localises to the cell membrane. This is an uncharacterized protein from Bacillus subtilis (strain 168).